Consider the following 376-residue polypeptide: Arf-GAP with dual PH domain-containing protein 2 (376 aa).

An Arf-GAP domain is found at 9–130; the sequence is KRLLELLQAA…EFMAEKAVSP (122 aa). The C4-type zinc finger occupies 25-48; sequence CADCGAADPDWASYKLGVFICLHC. PH domains are found at residues 131-232 and 254-360; these read PGDR…AARL and NYLK…GVLS.

As to expression, expressed in many tissues, with highest levels in fat, heart and skeletal muscle. Also detected in kidney, liver and lung.

Its subcellular location is the cytoplasm. The protein resides in the cell membrane. In terms of biological role, GTPase-activating protein for the ADP ribosylation factor family (Potential). Binds phosphatidylinositol 4,5-bisphosphate, phosphatidylinositol 3,4,5-trisphosphate (PtdInsP3) and inositol 1,3,4,5-tetrakisphosphate (InsP4). Binding of phosphatidylinositol 3,5-bisphosphate and phosphatidylinositol 3,4-bisphosphate occurs at a much lower affinity. Possesses a stoichiometry of two binding sites for InsP4 with identical affinity. In Rattus norvegicus (Rat), this protein is Arf-GAP with dual PH domain-containing protein 2 (Adap2).